The primary structure comprises 179 residues: Protein PLASTID REDOX INSENSITIVE 2, chloroplastic (179 aa).

A chloroplast-targeting transit peptide spans 1 to 69; it reads MASMHEALFS…SLSRRGFVCR (69 aa).

In terms of assembly, binds DNA when in complex with CSP41b.

The protein localises to the plastid. It is found in the chloroplast stroma. Its subcellular location is the chloroplast nucleoid. Involved in redox-mediated retrograde signaling to synchronize the expression of photosynthetic genes from both the nuclear and plastidic genomes, especially in excess light conditions. Required for full expression of genes transcribed by the plastid-encoded RNA polymerase (PEP). Essential for embryo development. This Arabidopsis thaliana (Mouse-ear cress) protein is Protein PLASTID REDOX INSENSITIVE 2, chloroplastic.